The following is a 198-amino-acid chain: Guanylate kinase (198 aa).

Position 2 is an N-acetylglycine (glycine 2). Residues 4 to 186 form the Guanylate kinase-like domain; it reads PRPVVLSGPS…AYWALKEALS (183 aa). 14 to 19 provides a ligand contact to ATP; that stretch reads GAGKST. 37–51 contacts substrate; the sequence is SHTTRDPRPGEENGK. Catalysis depends on residues arginine 44, arginine 137, and arginine 148. 171 to 172 is a binding site for ATP; it reads ND.

This sequence belongs to the guanylate kinase family. As to quaternary structure, monomer. Interacts with RD3.

It localises to the photoreceptor inner segment. The protein localises to the cytoplasm. It is found in the cytosol. The catalysed reaction is GMP + ATP = GDP + ADP. Its activity is regulated as follows. Up-regulated by RD3. In terms of biological role, catalyzes the phosphorylation of GMP to GDP. Essential enzyme for recycling GMP and indirectly, cyclic GMP (cGMP). Involved in the cGMP metabolism in photoreceptors. The polypeptide is Guanylate kinase (GUK1) (Sus scrofa (Pig)).